Consider the following 305-residue polypeptide: Sulfate adenylyltransferase subunit 2 (305 aa).

Belongs to the PAPS reductase family. CysD subfamily. Heterodimer composed of CysD, the smaller subunit, and CysN.

The enzyme catalyses sulfate + ATP + H(+) = adenosine 5'-phosphosulfate + diphosphate. It participates in sulfur metabolism; hydrogen sulfide biosynthesis; sulfite from sulfate: step 1/3. Functionally, with CysN forms the ATP sulfurylase (ATPS) that catalyzes the adenylation of sulfate producing adenosine 5'-phosphosulfate (APS) and diphosphate, the first enzymatic step in sulfur assimilation pathway. APS synthesis involves the formation of a high-energy phosphoric-sulfuric acid anhydride bond driven by GTP hydrolysis by CysN coupled to ATP hydrolysis by CysD. This is Sulfate adenylyltransferase subunit 2 from Pseudomonas syringae pv. tomato (strain ATCC BAA-871 / DC3000).